A 292-amino-acid polypeptide reads, in one-letter code: tRNA-splicing endonuclease (292 aa).

Catalysis depends on residues tyrosine 231, histidine 238, and lysine 267.

The protein belongs to the tRNA-intron endonuclease family. Archaeal long subfamily. In terms of assembly, homodimer.

The catalysed reaction is pretRNA = a 3'-half-tRNA molecule with a 5'-OH end + a 5'-half-tRNA molecule with a 2',3'-cyclic phosphate end + an intron with a 2',3'-cyclic phosphate and a 5'-hydroxyl terminus.. In terms of biological role, endonuclease that removes tRNA introns. Cleaves pre-tRNA at the 5'- and 3'-splice sites to release the intron. The products are an intron and two tRNA half-molecules bearing 2',3' cyclic phosphate and 5'-OH termini. Recognizes a pseudosymmetric substrate in which 2 bulged loops of 3 bases are separated by a stem of 4 bp. This Thermoplasma volcanium (strain ATCC 51530 / DSM 4299 / JCM 9571 / NBRC 15438 / GSS1) protein is tRNA-splicing endonuclease.